Here is a 524-residue protein sequence, read N- to C-terminus: MLKDIHQHRILILDFGSQYAQLIARRVREIGVYCELMPCDIDEETIRDFNPHGIILSGGPETVTLSHTLRAPAFIFEIGCPVLGICYGMQTMAYQLGGKVNRTAKAEFGHAQLRVLNPAFLFDGIEDQVSPQGEPLLDVWMSHGDIVSELPPGFEATACTDNSPLAAMADFKRRFFGLQFHPEVTHTPQGHRILAHFVIHICQCIPNWTTKHIIEDSIRDIQEKVGKEQVIVGLSGGVDSAVTATLVHKAIGDQLVCVLVDTGLLRLNEVDEVLNVFQKHLGAKVICVDAKDRFMKALKGISDPEEKRKIAGEQFIRVFEEQAKKLNVKWLGQGTIYPDVIESAKTKTGKGHIIKTHHNVGGLPLNMELKLIEPLRELFKDEVRKLGLELGLPADLIYRHPFPGPGLAIRILGEVSAEYINILKQADAIFIEELKKSDYYHQVSQAFAVFMPLKSVGVKGDARHYGYIIALRAVKTVDFMTAQWADLPHEFLSKVSHRIVNEIKEVSRVVYDMTNKPPATIEWE.

In terms of domain architecture, Glutamine amidotransferase type-1 spans 9-207; the sequence is RILILDFGSQ…VIHICQCIPN (199 aa). C86 acts as the Nucleophile in catalysis. Active-site residues include H181 and E183. Residues 208-399 enclose the GMPS ATP-PPase domain; the sequence is WTTKHIIEDS…LGLPADLIYR (192 aa). Residue 235–241 coordinates ATP; the sequence is SGGVDSA.

As to quaternary structure, homodimer.

The catalysed reaction is XMP + L-glutamine + ATP + H2O = GMP + L-glutamate + AMP + diphosphate + 2 H(+). It functions in the pathway purine metabolism; GMP biosynthesis; GMP from XMP (L-Gln route): step 1/1. Functionally, catalyzes the synthesis of GMP from XMP. This chain is GMP synthase [glutamine-hydrolyzing], found in Coxiella burnetii (strain RSA 493 / Nine Mile phase I).